We begin with the raw amino-acid sequence, 325 residues long: Fructose-1,6-bisphosphatase class 1 (325 aa).

Mg(2+) contacts are provided by Glu-84, Asp-103, Leu-105, and Asp-106. Residues 106–109 (DGSS), Asn-196, and Lys-262 each bind substrate. Position 268 (Glu-268) interacts with Mg(2+).

Belongs to the FBPase class 1 family. In terms of assembly, homotetramer. It depends on Mg(2+) as a cofactor.

The protein resides in the cytoplasm. The catalysed reaction is beta-D-fructose 1,6-bisphosphate + H2O = beta-D-fructose 6-phosphate + phosphate. The protein operates within carbohydrate biosynthesis; gluconeogenesis. The chain is Fructose-1,6-bisphosphatase class 1 from Shewanella oneidensis (strain ATCC 700550 / JCM 31522 / CIP 106686 / LMG 19005 / NCIMB 14063 / MR-1).